Consider the following 312-residue polypeptide: DNA-directed RNA polymerase subunit alpha (312 aa).

The segment at 1 to 226 (MIEFEKPIIT…EHLNLFTDLT (226 aa)) is alpha N-terminal domain (alpha-NTD). Residues 242 to 312 (NDEKLLDRTI…DLGLGLKNDK (71 aa)) form an alpha C-terminal domain (alpha-CTD) region.

Belongs to the RNA polymerase alpha chain family. Homodimer. The RNAP catalytic core consists of 2 alpha, 1 beta, 1 beta' and 1 omega subunit. When a sigma factor is associated with the core the holoenzyme is formed, which can initiate transcription.

It carries out the reaction RNA(n) + a ribonucleoside 5'-triphosphate = RNA(n+1) + diphosphate. Functionally, DNA-dependent RNA polymerase catalyzes the transcription of DNA into RNA using the four ribonucleoside triphosphates as substrates. The polypeptide is DNA-directed RNA polymerase subunit alpha (Streptococcus thermophilus (strain CNRZ 1066)).